The chain runs to 620 residues: MLSRVARNSSLLKQLPKLRQTTVLPVVLKNSIRFHATSSENKEIFTKLTDSKDPQRNQFFQYTWGSWLKNDKLNKKKRETVFSIEGLTLFLDTIKGFETTLSQPKHLHGSFVLGQNKDLLGEAEDKIILRSIASIHEGKHHRIYKLTLNTGRDLVLRIPYKLDSDAAIAAKIKSEVATLDFLNLKLGLKVPRVLSYGSDVYNEVGSPYILEEFIPGDLLMRKWHPLSPDSEETNKALHEVIDPIAEFQDKLLSVTFNKFGSLYFHDDVEGSLQNDLPYDGETNEDLKNRWRIGPSVERQFSKNKEKLPQNLIDELNGPWDASNPIALMESVADIELENAKNKLALINADAGANENDKDLINKQIKTFEHLKKITPLLINTKSKSIMNVEELFKPRLYIPDLDPLNVIQQGKDVNYFIDFEGSTIKPFILTGYPKFVAYEGAKIYNLEEDIPGYNELDELEKEQYAFMYYKTRNERMWEFELNKHRHDLIAVASPHIKVIKSPYLQALDLKTDNDHLYVEGSIVQLQALWEAYVANELVNSKDSKFPIEYTAEYLDQHQQDLSDHQLETVSSPFSATGGWIPQDMFNTLKDQGIIVETEDGNYKIETEKVLENPPKPEEKN.

The N-terminal 35 residues, 1–35 (MLSRVARNSSLLKQLPKLRQTTVLPVVLKNSIRFH), are a transit peptide targeting the mitochondrion.

The protein belongs to the AIM9 family.

It localises to the mitochondrion. The sequence is that of Altered inheritance of mitochondria protein 9, mitochondrial (AIM9) from Candida tropicalis (strain ATCC MYA-3404 / T1) (Yeast).